We begin with the raw amino-acid sequence, 571 residues long: DNA primase (571 aa).

Residues 20 to 44 form a CHC2-type zinc finger; it reads CPFHKEKTPSFQVDTEKGYYHCFGC. Positions 229–309 constitute a Toprim domain; that stretch reads AELVVVEGYM…KFRVRATSVP (81 aa). E235, D280, and D282 together coordinate Mg(2+).

It belongs to the DnaG primase family. As to quaternary structure, monomer. Interacts with DnaB. It depends on Zn(2+) as a cofactor. Mg(2+) serves as cofactor.

It catalyses the reaction ssDNA + n NTP = ssDNA/pppN(pN)n-1 hybrid + (n-1) diphosphate.. RNA polymerase that catalyzes the synthesis of short RNA molecules used as primers for DNA polymerase during DNA replication. This chain is DNA primase, found in Deinococcus radiodurans (strain ATCC 13939 / DSM 20539 / JCM 16871 / CCUG 27074 / LMG 4051 / NBRC 15346 / NCIMB 9279 / VKM B-1422 / R1).